The chain runs to 276 residues: C-type lectin domain family 12 member B (276 aa).

At 1–43 the chain is on the cytoplasmic side; it reads MSEDMTYATLTFQDSVAAGNNQDRNNLRKRGYPAPSSIWRQAA. Residues 5-10 carry the ITIM motif motif; it reads MTYATL. Tyr-7 is modified (phosphotyrosine). Residues 44 to 64 traverse the membrane as a helical; Signal-anchor for type II membrane protein segment; sequence LGLLTLCVMLLIGLVTLGIMF. Topologically, residues 65–276 are extracellular; that stretch reads LQMSSEINSD…AALVKIEDLD (212 aa). 3 N-linked (GlcNAc...) asparagine glycosylation sites follow: Asn-91, Asn-176, and Asn-237. Residues 150–264 form the C-type lectin domain; sequence YQTSCYYFAV…CSAEISWICE (115 aa). Disulfide bonds link Cys-172/Cys-263 and Cys-242/Cys-255.

In terms of assembly, homodimer. Interacts (via ITIM motif) with PTPN6. Interacts (via ITIM motif) with PTPN11; this interaction triggers dephosphorylation and activation of PTPN11.

It localises to the cell membrane. Inhibitory receptor postulated to negatively regulate immune and non-immune functions. Upon phosphorylation, recruits SH2 domain-containing PTPN6 and PTPN11 phosphatases to its ITIM motif and antagonizes activation signals. Although it inhibits KLRK1/NKG2D-mediated signaling, it does not bind known ligands of KLRK1/NKG2D and therefore is not its inhibitory counterpart. May limit activation of myeloid cell subsets in response to infection or tissue inflammation. May protect target cells against natural killer cell-mediated lysis. May negatively regulate cell cycle and differentiation of melanocytes via inactivation of STAT3. This chain is C-type lectin domain family 12 member B (CLEC12B), found in Bos taurus (Bovine).